The primary structure comprises 92 residues: Small ribosomal subunit protein uS19c (92 aa).

Belongs to the universal ribosomal protein uS19 family.

It localises to the plastid. The protein localises to the chloroplast. Protein S19 forms a complex with S13 that binds strongly to the 16S ribosomal RNA. This chain is Small ribosomal subunit protein uS19c, found in Illicium oligandrum (Star anise).